The sequence spans 483 residues: Protein nucleotidyltransferase YdiU (483 aa).

The ATP site is built by Gly100, Gly102, Arg103, Lys123, Asp135, Gly136, Arg189, and Arg196. Asp265 acts as the Proton acceptor in catalysis. Asn266 and Asp275 together coordinate Mg(2+). Asp275 provides a ligand contact to ATP.

This sequence belongs to the SELO family. It depends on Mg(2+) as a cofactor. The cofactor is Mn(2+).

It carries out the reaction L-seryl-[protein] + ATP = 3-O-(5'-adenylyl)-L-seryl-[protein] + diphosphate. The catalysed reaction is L-threonyl-[protein] + ATP = 3-O-(5'-adenylyl)-L-threonyl-[protein] + diphosphate. It catalyses the reaction L-tyrosyl-[protein] + ATP = O-(5'-adenylyl)-L-tyrosyl-[protein] + diphosphate. The enzyme catalyses L-histidyl-[protein] + UTP = N(tele)-(5'-uridylyl)-L-histidyl-[protein] + diphosphate. It carries out the reaction L-seryl-[protein] + UTP = O-(5'-uridylyl)-L-seryl-[protein] + diphosphate. The catalysed reaction is L-tyrosyl-[protein] + UTP = O-(5'-uridylyl)-L-tyrosyl-[protein] + diphosphate. Functionally, nucleotidyltransferase involved in the post-translational modification of proteins. It can catalyze the addition of adenosine monophosphate (AMP) or uridine monophosphate (UMP) to a protein, resulting in modifications known as AMPylation and UMPylation. The sequence is that of Protein nucleotidyltransferase YdiU from Gloeobacter violaceus (strain ATCC 29082 / PCC 7421).